The following is a 311-amino-acid chain: Cytochrome f (311 aa).

The signal sequence occupies residues 1 to 27 (MRRHLSLLIGSLVLGLSLLIAPAASWA). Heme-binding residues include Tyr28, Cys48, Cys51, and His52. A helical membrane pass occupies residues 277 to 297 (IYGLLAFFAAVALAQIMLVLK).

This sequence belongs to the cytochrome f family. The 4 large subunits of the cytochrome b6-f complex are cytochrome b6, subunit IV (17 kDa polypeptide, PetD), cytochrome f and the Rieske protein, while the 4 small subunits are PetG, PetL, PetM and PetN. The complex functions as a dimer. Heme is required as a cofactor.

The protein localises to the cellular thylakoid membrane. Component of the cytochrome b6-f complex, which mediates electron transfer between photosystem II (PSII) and photosystem I (PSI), cyclic electron flow around PSI, and state transitions. This Parasynechococcus marenigrum (strain WH8102) protein is Cytochrome f.